A 344-amino-acid polypeptide reads, in one-letter code: Phosphoribosylformylglycinamidine cyclo-ligase (344 aa).

Belongs to the AIR synthase family.

Its subcellular location is the cytoplasm. It catalyses the reaction 2-formamido-N(1)-(5-O-phospho-beta-D-ribosyl)acetamidine + ATP = 5-amino-1-(5-phospho-beta-D-ribosyl)imidazole + ADP + phosphate + H(+). It participates in purine metabolism; IMP biosynthesis via de novo pathway; 5-amino-1-(5-phospho-D-ribosyl)imidazole from N(2)-formyl-N(1)-(5-phospho-D-ribosyl)glycinamide: step 2/2. This Synechococcus sp. (strain RCC307) protein is Phosphoribosylformylglycinamidine cyclo-ligase.